A 330-amino-acid chain; its full sequence is Mas-related G-protein coupled receptor member X2 (330 aa).

The Extracellular portion of the chain corresponds to Met1–Pro33. The chain crosses the membrane as a helical span at residues Val34–Leu54. The Cytoplasmic portion of the chain corresponds to Leu55–Ala63. The chain crosses the membrane as a helical span at residues Phe64–Ile84. Topologically, residues Asn85–Ser96 are extracellular. The chain crosses the membrane as a helical span at residues Ile97–Leu117. The Cytoplasmic portion of the chain corresponds to Ser118–His144. The chain crosses the membrane as a helical span at residues Leu145–Gly165. Over Lys166–Asp184 the chain is Extracellular. Residues Phe185–Leu205 traverse the membrane as a helical segment. At Leu206–Thr228 the chain is on the cytoplasmic side. The helical transmembrane segment at Val229 to Ile249 threads the bilayer. Over Trp250–Ser264 the chain is Extracellular. The chain crosses the membrane as a helical span at residues Val265–Phe285. Topologically, residues Arg286–Val330 are cytoplasmic.

It belongs to the G-protein coupled receptor 1 family. Mas subfamily.

It is found in the cell membrane. Its function is as follows. Mast cell-specific receptor for basic secretagogues, i.e. cationic amphiphilic drugs, as well as endo- or exogenous peptides, consisting of a basic head group and a hydrophobic core. Recognizes and binds small molecules containing a cyclized tetrahydroisoquinoline (THIQ), such as non-steroidal neuromuscular blocking drugs (NMBDs), including tubocurarine and atracurium. In response to these compounds, mediates pseudo-allergic reactions characterized by histamine release, inflammation and airway contraction. In Pongo pygmaeus (Bornean orangutan), this protein is Mas-related G-protein coupled receptor member X2 (MRGPRX2).